The following is a 107-amino-acid chain: uncharacterized protein (107 aa).

A disordered region spans residues S23–N64. The segment covering A37–S57 has biased composition (low complexity). A helical membrane pass occupies residues L76–F98.

The protein localises to the membrane. This is an uncharacterized protein from Dictyostelium discoideum (Social amoeba).